Reading from the N-terminus, the 283-residue chain is 4-hydroxy-3-methylbut-2-enyl diphosphate reductase (283 aa).

Residue Cys-12 coordinates [4Fe-4S] cluster. The (2E)-4-hydroxy-3-methylbut-2-enyl diphosphate site is built by His-41 and His-74. Dimethylallyl diphosphate-binding residues include His-41 and His-74. The isopentenyl diphosphate site is built by His-41 and His-74. Cys-96 is a binding site for [4Fe-4S] cluster. His-124 provides a ligand contact to (2E)-4-hydroxy-3-methylbut-2-enyl diphosphate. His-124 is a dimethylallyl diphosphate binding site. His-124 lines the isopentenyl diphosphate pocket. Catalysis depends on Glu-126, which acts as the Proton donor. Thr-161 is a (2E)-4-hydroxy-3-methylbut-2-enyl diphosphate binding site. [4Fe-4S] cluster is bound at residue Cys-189. (2E)-4-hydroxy-3-methylbut-2-enyl diphosphate contacts are provided by Ser-217, Asn-219, and Ser-261. Dimethylallyl diphosphate-binding residues include Ser-217, Asn-219, and Ser-261. Positions 217, 219, and 261 each coordinate isopentenyl diphosphate.

It belongs to the IspH family. Requires [4Fe-4S] cluster as cofactor.

It carries out the reaction isopentenyl diphosphate + 2 oxidized [2Fe-2S]-[ferredoxin] + H2O = (2E)-4-hydroxy-3-methylbut-2-enyl diphosphate + 2 reduced [2Fe-2S]-[ferredoxin] + 2 H(+). The enzyme catalyses dimethylallyl diphosphate + 2 oxidized [2Fe-2S]-[ferredoxin] + H2O = (2E)-4-hydroxy-3-methylbut-2-enyl diphosphate + 2 reduced [2Fe-2S]-[ferredoxin] + 2 H(+). It participates in isoprenoid biosynthesis; dimethylallyl diphosphate biosynthesis; dimethylallyl diphosphate from (2E)-4-hydroxy-3-methylbutenyl diphosphate: step 1/1. The protein operates within isoprenoid biosynthesis; isopentenyl diphosphate biosynthesis via DXP pathway; isopentenyl diphosphate from 1-deoxy-D-xylulose 5-phosphate: step 6/6. Its function is as follows. Catalyzes the conversion of 1-hydroxy-2-methyl-2-(E)-butenyl 4-diphosphate (HMBPP) into a mixture of isopentenyl diphosphate (IPP) and dimethylallyl diphosphate (DMAPP). Acts in the terminal step of the DOXP/MEP pathway for isoprenoid precursor biosynthesis. This Anaeromyxobacter sp. (strain Fw109-5) protein is 4-hydroxy-3-methylbut-2-enyl diphosphate reductase.